A 61-amino-acid polypeptide reads, in one-letter code: Large ribosomal subunit protein uL30 (61 aa).

Belongs to the universal ribosomal protein uL30 family. In terms of assembly, part of the 50S ribosomal subunit.

The protein is Large ribosomal subunit protein uL30 of Neisseria meningitidis serogroup C (strain 053442).